The primary structure comprises 173 residues: MENIIARRYAKAIASRADINDFYQNLCILNSAFVLPKFKNIIESNEIKKERKMEFLDSFFDIKNSSFQNFLRLLIENSRLEYIPQIVKELERQKAFKENIFVGIVYSKEKLSQENLKDLEVKLNKKFDANIKLNNKISQDDSVKIELEELGYELSFSMKALQNKLNEYILKII.

This sequence belongs to the ATPase delta chain family. In terms of assembly, F-type ATPases have 2 components, F(1) - the catalytic core - and F(0) - the membrane proton channel. F(1) has five subunits: alpha(3), beta(3), gamma(1), delta(1), epsilon(1). F(0) has three main subunits: a(1), b(2) and c(10-14). The alpha and beta chains form an alternating ring which encloses part of the gamma chain. F(1) is attached to F(0) by a central stalk formed by the gamma and epsilon chains, while a peripheral stalk is formed by the delta and b chains.

It is found in the cell inner membrane. F(1)F(0) ATP synthase produces ATP from ADP in the presence of a proton or sodium gradient. F-type ATPases consist of two structural domains, F(1) containing the extramembraneous catalytic core and F(0) containing the membrane proton channel, linked together by a central stalk and a peripheral stalk. During catalysis, ATP synthesis in the catalytic domain of F(1) is coupled via a rotary mechanism of the central stalk subunits to proton translocation. Functionally, this protein is part of the stalk that links CF(0) to CF(1). It either transmits conformational changes from CF(0) to CF(1) or is implicated in proton conduction. The chain is ATP synthase subunit delta from Campylobacter jejuni subsp. jejuni serotype O:6 (strain 81116 / NCTC 11828).